The primary structure comprises 404 residues: Keratin, type I cuticular Ha3-II (404 aa).

The segment at 1–56 is head; it reads MPYNFCLPSLSCRTSCSSRPCVPPSCHGYTLPGACNIPANVSNCNWFCEGSFNGSE. Positions 56 to 367 constitute an IF rod domain; that stretch reads EKETMQFLND…SLLESEDCKL (312 aa). The tract at residues 57–91 is coil 1A; it reads KETMQFLNDRLASYLEKVRQLERDNAELENLIRER. A linker 1 region spans residues 92–102; that stretch reads SQQQEPLLCPS. The interval 103 to 203 is coil 1B; sequence YQSYFKTIEE…HEQEVNTLRC (101 aa). Residues 204–219 form a linker 12 region; the sequence is QLGDRLNVEVDAAPAV. Residues 220–363 are coil 2; the sequence is DLNQVLNETR…NTYRSLLESE (144 aa). Residues 364–404 are tail; that stretch reads DCKLPSNPCATTNACEKPIGSCVTNPCGPRSRCGPCNTFGY.

It belongs to the intermediate filament family.

This is Keratin, type I cuticular Ha3-II (KRT33B) from Homo sapiens (Human).